Consider the following 353-residue polypeptide: Photosystem II D2 protein (353 aa).

At Thr2 the chain carries N-acetylthreonine. A Phosphothreonine modification is found at Thr2. The helical transmembrane segment at Cys41–Thr61 threads the bilayer. His118 provides a ligand contact to chlorophyll a. Residues Gly125 to Pro141 form a helical membrane-spanning segment. Pheophytin a contacts are provided by Gln130 and Asn143. Residues Val153–Ser166 form a helical membrane-spanning segment. His198 is a binding site for chlorophyll a. The helical transmembrane segment at Ala208 to Asp228 threads the bilayer. His215 and Phe262 together coordinate a plastoquinone. His215 lines the Fe cation pocket. His269 is a Fe cation binding site. Residues Gly279 to Arg295 form a helical membrane-spanning segment.

This sequence belongs to the reaction center PufL/M/PsbA/D family. In terms of assembly, PSII is composed of 1 copy each of membrane proteins PsbA, PsbB, PsbC, PsbD, PsbE, PsbF, PsbH, PsbI, PsbJ, PsbK, PsbL, PsbM, PsbT, PsbX, PsbY, PsbZ, Psb30/Ycf12, at least 3 peripheral proteins of the oxygen-evolving complex and a large number of cofactors. It forms dimeric complexes. Requires The D1/D2 heterodimer binds P680, chlorophylls that are the primary electron donor of PSII, and subsequent electron acceptors. It shares a non-heme iron and each subunit binds pheophytin, quinone, additional chlorophylls, carotenoids and lipids. There is also a Cl(-1) ion associated with D1 and D2, which is required for oxygen evolution. The PSII complex binds additional chlorophylls, carotenoids and specific lipids. as cofactor.

The protein localises to the plastid. Its subcellular location is the chloroplast thylakoid membrane. The enzyme catalyses 2 a plastoquinone + 4 hnu + 2 H2O = 2 a plastoquinol + O2. Its function is as follows. Photosystem II (PSII) is a light-driven water:plastoquinone oxidoreductase that uses light energy to abstract electrons from H(2)O, generating O(2) and a proton gradient subsequently used for ATP formation. It consists of a core antenna complex that captures photons, and an electron transfer chain that converts photonic excitation into a charge separation. The D1/D2 (PsbA/PsbD) reaction center heterodimer binds P680, the primary electron donor of PSII as well as several subsequent electron acceptors. D2 is needed for assembly of a stable PSII complex. This chain is Photosystem II D2 protein, found in Barbarea verna (Land cress).